A 338-amino-acid polypeptide reads, in one-letter code: UDP-glucose 4-epimerase (338 aa).

Residues Y11 to I12, D31 to S36, D58 to I59, F80 to K84, N99, S124, Y149, K153, and F178 each bind NAD(+). Positions 124 and 149 each coordinate substrate. Y149 (proton acceptor) is an active-site residue. Substrate-binding positions include N179, N199–L200, A216–F218, R231, R292–D295, and Y299.

Belongs to the NAD(P)-dependent epimerase/dehydratase family. As to quaternary structure, homodimer. It depends on NAD(+) as a cofactor.

The catalysed reaction is UDP-alpha-D-glucose = UDP-alpha-D-galactose. Its pathway is carbohydrate metabolism; galactose metabolism. Involved in the metabolism of galactose. Catalyzes the conversion of UDP-galactose (UDP-Gal) to UDP-glucose (UDP-Glc) through a mechanism involving the transient reduction of NAD. This is UDP-glucose 4-epimerase (galE) from Salmonella typhimurium (strain LT2 / SGSC1412 / ATCC 700720).